We begin with the raw amino-acid sequence, 475 residues long: Nitrogenase vanadium-iron protein beta chain (475 aa).

4 residues coordinate [8Fe-7S] cluster: cysteine 31, cysteine 56, cysteine 115, and serine 153.

This sequence belongs to the NifD/NifK/NifE/NifN family. As to quaternary structure, hexamer of two alpha, two beta, and two delta chains. [8Fe-7S] cluster is required as a cofactor.

The catalysed reaction is N2 + 8 reduced [2Fe-2S]-[ferredoxin] + 16 ATP + 16 H2O = H2 + 8 oxidized [2Fe-2S]-[ferredoxin] + 2 NH4(+) + 16 ADP + 16 phosphate + 6 H(+). Its function is as follows. This vanadium-iron protein is part of the nitrogenase complex that catalyzes the key enzymatic reactions in nitrogen fixation. The polypeptide is Nitrogenase vanadium-iron protein beta chain (vnfK) (Azotobacter vinelandii).